We begin with the raw amino-acid sequence, 321 residues long: Phosphatidylglycerol phospholipase C (321 aa).

Positions 2-251 (VEIVGHRAFK…DDPIKARKLC (250 aa)) constitute a GP-PDE domain. The chain crosses the membrane as a helical; Anchor for type IV membrane protein span at residues 297-315 (WVHIKLCGWSIAYVIFLFL).

This sequence belongs to the glycerophosphoryl diester phosphodiesterase family.

Its subcellular location is the mitochondrion membrane. The protein resides in the lipid droplet. The catalysed reaction is a 1,2-diacyl-sn-glycero-3-phospho-(1'-sn-glycerol) + H2O = sn-glycerol 3-phosphate + a 1,2-diacyl-sn-glycerol + H(+). Its function is as follows. Phosphatidylglycerol phospholipase required for the removal of excess phosphatidylglycerol (PG) via a phospholipase C-type degradation mechanism. This is Phosphatidylglycerol phospholipase C (PGC1) from Saccharomyces cerevisiae (strain ATCC 204508 / S288c) (Baker's yeast).